A 164-amino-acid chain; its full sequence is Transcriptional repressor NrdR (164 aa).

A zinc finger lies at cysteine 3–cysteine 34. The ATP-cone domain maps to leucine 49–glutamate 139.

Belongs to the NrdR family. Zn(2+) serves as cofactor.

Its function is as follows. Negatively regulates transcription of bacterial ribonucleotide reductase nrd genes and operons by binding to NrdR-boxes. In Streptococcus pyogenes serotype M6 (strain ATCC BAA-946 / MGAS10394), this protein is Transcriptional repressor NrdR.